The chain runs to 252 residues: Imidazole glycerol phosphate synthase subunit HisF (252 aa).

Residues aspartate 11 and aspartate 130 contribute to the active site.

This sequence belongs to the HisA/HisF family. Heterodimer of HisH and HisF.

It is found in the cytoplasm. The catalysed reaction is 5-[(5-phospho-1-deoxy-D-ribulos-1-ylimino)methylamino]-1-(5-phospho-beta-D-ribosyl)imidazole-4-carboxamide + L-glutamine = D-erythro-1-(imidazol-4-yl)glycerol 3-phosphate + 5-amino-1-(5-phospho-beta-D-ribosyl)imidazole-4-carboxamide + L-glutamate + H(+). It participates in amino-acid biosynthesis; L-histidine biosynthesis; L-histidine from 5-phospho-alpha-D-ribose 1-diphosphate: step 5/9. In terms of biological role, IGPS catalyzes the conversion of PRFAR and glutamine to IGP, AICAR and glutamate. The HisF subunit catalyzes the cyclization activity that produces IGP and AICAR from PRFAR using the ammonia provided by the HisH subunit. This is Imidazole glycerol phosphate synthase subunit HisF from Thermococcus kodakarensis (strain ATCC BAA-918 / JCM 12380 / KOD1) (Pyrococcus kodakaraensis (strain KOD1)).